We begin with the raw amino-acid sequence, 385 residues long: Probable splicing factor YJU2B (385 aa).

The disordered stretch occupies residues 1-26 (MGERKGQNKYYPPDFNPEKHGSLNRY). Residue Ser40 is modified to Phosphoserine. Positions 182–214 (LNSMLRRHFREKKKAMQEEEEKDQALQAKASLA) form a coiled coil. Residues 257-385 (PSAQGPSASS…VADYSDSESE (129 aa)) form a disordered region. Positions 258–271 (SAQGPSASSSKASS) are enriched in low complexity. Ser306 is modified (phosphoserine). A compositionally biased stretch (polar residues) spans 359-373 (GSSQEDLLNPNTPNA).

The protein belongs to the CWC16 family.

It localises to the nucleus. Functionally, may be involved in mRNA splicing. The protein is Probable splicing factor YJU2B (Yju2b) of Mus musculus (Mouse).